A 168-amino-acid polypeptide reads, in one-letter code: uncharacterized protein (168 aa).

Disordered stretches follow at residues 1–81 (MSSA…GRSW) and 119–150 (RDLS…STVA). A compositionally biased stretch (low complexity) spans 7-34 (SRTSRSKATGASSSSISSSIRASPSSSS). Residues 43-67 (TRRRRRRTGRRSTKRSIISPRRRRM) are compositionally biased toward basic residues. Residues 123-146 (ESASTGSENLSRKASNQSQSQGRL) are compositionally biased toward polar residues.

This is an uncharacterized protein from Human adenovirus C serotype 2 (HAdV-2).